The primary structure comprises 182 residues: Large ribosomal subunit protein uL10 (182 aa).

The protein belongs to the universal ribosomal protein uL10 family. Part of the ribosomal stalk of the 50S ribosomal subunit. The N-terminus interacts with L11 and the large rRNA to form the base of the stalk. The C-terminus forms an elongated spine to which L12 dimers bind in a sequential fashion forming a multimeric L10(L12)X complex.

Functionally, forms part of the ribosomal stalk, playing a central role in the interaction of the ribosome with GTP-bound translation factors. This is Large ribosomal subunit protein uL10 from Herminiimonas arsenicoxydans.